The chain runs to 349 residues: tRNA N6-adenosine threonylcarbamoyltransferase (349 aa).

His116 and His120 together coordinate Fe cation. Substrate is bound by residues Leu139–Gly143, Asp172, Gly185, and Asn283. Asp311 contacts Fe cation.

Belongs to the KAE1 / TsaD family. Requires Fe(2+) as cofactor.

The protein localises to the cytoplasm. The enzyme catalyses L-threonylcarbamoyladenylate + adenosine(37) in tRNA = N(6)-L-threonylcarbamoyladenosine(37) in tRNA + AMP + H(+). Required for the formation of a threonylcarbamoyl group on adenosine at position 37 (t(6)A37) in tRNAs that read codons beginning with adenine. Is involved in the transfer of the threonylcarbamoyl moiety of threonylcarbamoyl-AMP (TC-AMP) to the N6 group of A37, together with TsaE and TsaB. TsaD likely plays a direct catalytic role in this reaction. In Colwellia psychrerythraea (strain 34H / ATCC BAA-681) (Vibrio psychroerythus), this protein is tRNA N6-adenosine threonylcarbamoyltransferase.